Reading from the N-terminus, the 466-residue chain is Soluble pyridine nucleotide transhydrogenase (466 aa).

An FAD-binding site is contributed by 36 to 45; sequence ERYNNVGGGC.

Belongs to the class-I pyridine nucleotide-disulfide oxidoreductase family. The cofactor is FAD.

Its subcellular location is the cytoplasm. The enzyme catalyses NAD(+) + NADPH = NADH + NADP(+). Its function is as follows. Conversion of NADPH, generated by peripheral catabolic pathways, to NADH, which can enter the respiratory chain for energy generation. The protein is Soluble pyridine nucleotide transhydrogenase of Yersinia pseudotuberculosis serotype O:1b (strain IP 31758).